Consider the following 53-residue polypeptide: Large ribosomal subunit protein eL40 (53 aa).

This sequence belongs to the eukaryotic ribosomal protein eL40 family.

The chain is Large ribosomal subunit protein eL40 from Pyrobaculum calidifontis (strain DSM 21063 / JCM 11548 / VA1).